We begin with the raw amino-acid sequence, 520 residues long: Probable cytochrome P450 6v1 (520 aa).

Residue C465 participates in heme binding.

It belongs to the cytochrome P450 family. Heme serves as cofactor.

Its subcellular location is the endoplasmic reticulum membrane. The protein localises to the microsome membrane. Functionally, may be involved in the metabolism of insect hormones and in the breakdown of synthetic insecticides. This is Probable cytochrome P450 6v1 (Cyp6v1) from Drosophila melanogaster (Fruit fly).